The sequence spans 901 residues: MSSPRPSTSSTSSDSGLSVDTTAYPEESKYTSTAPGAGGLSDENRYRDVEEGEAGADEPFLPSAKKQAASGSRTSRLIWGLVILCVAGWLWGLVLFVTQNRSAQQSVSEALQSHESGAISGSSSSGKPVTLEQVLTGQWLPRSHAVSWIAGPNGEDGLLVEQGEDQGKGYLRVDDIRSRKGDATSQESRVLMEKAIVQVDGRTIFPVSTWPSPNLNKVLLLSEREKNWRHSFTGKYWIFDVATQTAQPLDPSNPDGRVQLAIWSPTSDMVAFVRDNNLYLRKLSSKEVVPITKDGGADLFYGIPDWVYEEEVFSGNSVTWWSGDGKYVAFLRTNETAVPEFPVQYYLSRPSGKRPPPGLEDYPEVREIKYPKAGAPNPVVSLQFYDVEKQEVFSIEAPDNFEDDDRIIIEIVWGTEGKILVRATNRESDVLKVFLFDTKARTSKLVRVENVADIDGGWVEPTQYTWFIPADPSNGRPHDGYLDTVIHEGYEHLGYFTPLDNSEPILLTQGEWEVVDAPTAVDLRKGIVYFISTKESPTERHLYQVNLDGSNLKPLTDTSKPGYYDVSFSHGTGYALLSYRGPSIPWQAIVNTETDELKYEETIEDNAGLARMVDSYALPTEIYQNVTIDGFTLQVVERRPPHFNPAKKYPVLFYLYNGPRSQTVDRKFNIDFQSYVASSLGYIVVTVDGRGTGFSGRKTRCIVRGNLGYYEAYDQITTAKLWGEKPYVDETRMSIWGWSYGGFMTLKTLEQDAGQTFQYGMAVAPVTDWRHYDSIYTERYMHTPAHNPNGYDNTSITDMTALQQTVRFLVIHGASDDNVHIQNTLVLVDKLDLAGVQNYDLHFYPDSDHSINFHNAHRMVYERLSSWLVNAFNDEWHRIADPVPDDSMWEKVKRSLPMLVK.

A compositionally biased stretch (low complexity) spans 1-22 (MSSPRPSTSSTSSDSGLSVDTT). Residues 1-67 (MSSPRPSTSS…EPFLPSAKKQ (67 aa)) are disordered. The Cytoplasmic portion of the chain corresponds to 1 to 76 (MSSPRPSTSS…QAASGSRTSR (76 aa)). A helical; Signal-anchor for type II membrane protein membrane pass occupies residues 77-97 (LIWGLVILCVAGWLWGLVLFV). The Vacuolar segment spans residues 98-901 (TQNRSAQQSV…VKRSLPMLVK (804 aa)). Asn-334 and Asn-625 each carry an N-linked (GlcNAc...) asparagine glycan. The active-site Charge relay system is Ser-739. N-linked (GlcNAc...) asparagine glycosylation is present at Asn-793. Catalysis depends on charge relay system residues Asp-816 and His-849.

This sequence belongs to the peptidase S9B family.

Its subcellular location is the vacuole membrane. The enzyme catalyses Release of an N-terminal dipeptide, Xaa-Yaa-|-Zaa-, from a polypeptide, preferentially when Yaa is Pro, provided Zaa is neither Pro nor hydroxyproline.. Functionally, type IV dipeptidyl-peptidase which removes N-terminal dipeptides sequentially from polypeptides having unsubstituted N-termini provided that the penultimate residue is proline. This Aspergillus niger (strain ATCC MYA-4892 / CBS 513.88 / FGSC A1513) protein is Probable dipeptidyl-aminopeptidase B (dapB).